A 260-amino-acid chain; its full sequence is Homeobox-leucine zipper protein HOX25 (260 aa).

Acidic residues predominate over residues 1 to 10; that stretch reads MEDLVDELYG. 3 disordered regions span residues 1-24, 121-145, and 190-221; these read MEDLVDELYGVDEQGSSSAAARKR, ANGKSPSPSPAPAEQTAVPAAPESA, and SPESYFAGARSPPSSSEDDCGGAGSDDDYPSS. A DNA-binding region (homeobox) is located at residues 19–79; it reads AAARKRRLTA…NRRARWKTKQ (61 aa). The leucine-zipper stretch occupies residues 78 to 122; that stretch reads KQLELDFDRLRAAHDELLAGRAALAADNESLRSQVILLTEKLQAN. A compositionally biased stretch (acidic residues) spans 205–218; sequence SEDDCGGAGSDDDY.

This sequence belongs to the HD-ZIP homeobox family. Class I subfamily. In terms of tissue distribution, expressed in roots, leaf sheaths and blades and panicles.

Its subcellular location is the nucleus. In terms of biological role, probable transcription factor. The chain is Homeobox-leucine zipper protein HOX25 (HOX25) from Oryza sativa subsp. indica (Rice).